Here is a 327-residue protein sequence, read N- to C-terminus: Melanoma-associated antigen B18 (327 aa).

Residues 1–19 (MPRGQKSKLRAREKRRQAR) show a composition bias toward basic residues. The interval 1–85 (MPRGQKSKLR…SSDDSEDTED (85 aa)) is disordered. A compositionally biased stretch (polar residues) spans 46 to 70 (MPTSPNMPMGEQSTFSHSYTSTSDQ). An MAGE domain is found at 91 to 289 (INHKVVLLVQ…DSFPTLYEAA (199 aa)).

In terms of assembly, interacts with LNX1. Expressed in testis, stomach, large intestine, small intestine, spleen, lymph node, bone marrow lymphocytes and blood T-lymphocytes. Not detected in brain, heart, lung, liver or kidney (at protein level).

Its subcellular location is the cytoplasm. In terms of biological role, may enhance ubiquitin ligase activity of RING-type zinc finger-containing E3 ubiquitin-protein ligases. Proposed to act through recruitment and/or stabilization of the Ubl-conjugating enzyme (E2) at the E3:substrate complex. This Mus musculus (Mouse) protein is Melanoma-associated antigen B18.